The primary structure comprises 329 residues: UDP-N-acetylenolpyruvoylglucosamine reductase (329 aa).

The FAD-binding PCMH-type domain occupies 28-192 (RVGGPADLLC…ARVEVRLHAG (165 aa)). The active site involves Arg-172. Residues 202–227 (REDRERRRATQPLDRPTFGSTFTNPP) form a disordered region. Catalysis depends on Ser-221, which acts as the Proton donor. Glu-291 is an active-site residue. Residues 307-329 (DGHAAAGGGPGAASGGVRPPEAT) are disordered. The segment covering 311–320 (AAGGGPGAAS) has biased composition (gly residues).

This sequence belongs to the MurB family. FAD is required as a cofactor.

It localises to the cytoplasm. The catalysed reaction is UDP-N-acetyl-alpha-D-muramate + NADP(+) = UDP-N-acetyl-3-O-(1-carboxyvinyl)-alpha-D-glucosamine + NADPH + H(+). It participates in cell wall biogenesis; peptidoglycan biosynthesis. In terms of biological role, cell wall formation. The sequence is that of UDP-N-acetylenolpyruvoylglucosamine reductase from Anaeromyxobacter sp. (strain K).